The following is a 339-amino-acid chain: MO25-like protein 3 (339 aa).

Belongs to the Mo25 family.

The polypeptide is MO25-like protein 3 (mop-25.3) (Caenorhabditis elegans).